Consider the following 132-residue polypeptide: Small ribosomal subunit protein uS9 (132 aa).

This sequence belongs to the universal ribosomal protein uS9 family.

In Halobacterium salinarum (strain ATCC 700922 / JCM 11081 / NRC-1) (Halobacterium halobium), this protein is Small ribosomal subunit protein uS9 (rps9).